A 120-amino-acid polypeptide reads, in one-letter code: Large ribosomal subunit protein eL8 (120 aa).

The protein belongs to the eukaryotic ribosomal protein eL8 family. As to quaternary structure, part of the 50S ribosomal subunit. Probably part of the RNase P complex.

The protein localises to the cytoplasm. Multifunctional RNA-binding protein that recognizes the K-turn motif in ribosomal RNA, the RNA component of RNase P, box H/ACA, box C/D and box C'/D' sRNAs. In Natronomonas pharaonis (strain ATCC 35678 / DSM 2160 / CIP 103997 / JCM 8858 / NBRC 14720 / NCIMB 2260 / Gabara) (Halobacterium pharaonis), this protein is Large ribosomal subunit protein eL8.